The sequence spans 595 residues: Beta-(1--&gt;2)glucan export ATP-binding/permease protein NdvA (595 aa).

Positions 21–301 (SLLICAANVM…MSNFINLTVS (281 aa)) constitute an ABC transmembrane type-1 domain. 5 helical membrane-spanning segments follow: residues 22-42 (LLICAANVMLAIITIAEPILF), 55-75 (IILTLTIWVCFGISHIIAYVL), 128-148 (AIWLDFMRQHLSTLVALFILI), 152-172 (FNMNWRLSIVLVVLAIIYVLI), and 248-268 (TASTISIVCVLLLGAFFVAKG). Positions 335-569 (VQFHHVTYKF…GGRFYKLLKA (235 aa)) constitute an ABC transporter domain. Residue 368-375 (GPTGAGKT) participates in ATP binding.

The protein belongs to the ABC transporter superfamily. Beta-(1--&gt;2)glucan exporter (TC 3.A.1.108.1) family. As to quaternary structure, homodimer.

It is found in the cell inner membrane. It catalyses the reaction [(1-&gt;2)-beta-D-glucosyl](n)(in) + ATP + H2O = [(1-&gt;2)-beta-D-glucosyl](n)(out) + ADP + phosphate + H(+). Functionally, involved in beta-(1--&gt;2)glucan export. Transmembrane domains (TMD) form a pore in the inner membrane and the ATP-binding domain (NBD) is responsible for energy generation. The polypeptide is Beta-(1--&gt;2)glucan export ATP-binding/permease protein NdvA (Bartonella quintana (strain Toulouse) (Rochalimaea quintana)).